A 316-amino-acid polypeptide reads, in one-letter code: Ribosomal protein L11 methyltransferase (316 aa).

Positions 157, 178, 200, and 243 each coordinate S-adenosyl-L-methionine.

Belongs to the methyltransferase superfamily. PrmA family.

The protein resides in the cytoplasm. The catalysed reaction is L-lysyl-[protein] + 3 S-adenosyl-L-methionine = N(6),N(6),N(6)-trimethyl-L-lysyl-[protein] + 3 S-adenosyl-L-homocysteine + 3 H(+). Functionally, methylates ribosomal protein L11. In Streptococcus pneumoniae serotype 2 (strain D39 / NCTC 7466), this protein is Ribosomal protein L11 methyltransferase.